The primary structure comprises 109 residues: uncharacterized protein (109 aa).

This is an uncharacterized protein from Saccharomyces cerevisiae (strain ATCC 204508 / S288c) (Baker's yeast).